Here is a 449-residue protein sequence, read N- to C-terminus: Phosphoglucosamine mutase (449 aa).

The active-site Phosphoserine intermediate is Ser-100. Residues Ser-100, Asp-241, Asp-243, and Asp-245 each coordinate Mg(2+). Phosphoserine is present on Ser-100.

This sequence belongs to the phosphohexose mutase family. The cofactor is Mg(2+). Post-translationally, activated by phosphorylation.

The enzyme catalyses alpha-D-glucosamine 1-phosphate = D-glucosamine 6-phosphate. In terms of biological role, catalyzes the conversion of glucosamine-6-phosphate to glucosamine-1-phosphate. The sequence is that of Phosphoglucosamine mutase from Clostridium kluyveri (strain NBRC 12016).